We begin with the raw amino-acid sequence, 398 residues long: uncharacterized protein (398 aa).

Transmembrane regions (helical) follow at residues 37 to 57, 92 to 112, 122 to 142, 186 to 206, 228 to 248, and 268 to 288; these read LVIL…FVQF, IFNA…FIFG, LLTL…SYIP, LFYG…ILII, IGGI…VIGT, and FGVA…NIVL.

It localises to the cell membrane. This is an uncharacterized protein from Mycoplasma genitalium (strain ATCC 33530 / DSM 19775 / NCTC 10195 / G37) (Mycoplasmoides genitalium).